A 490-amino-acid chain; its full sequence is Betaine aldehyde dehydrogenase (490 aa).

K(+) contacts are provided by Thr-26, Ile-27, and Asp-93. 150–152 (GAW) serves as a coordination point for NAD(+). The active-site Charge relay system is the Lys-162. 176–179 (KPSE) serves as a coordination point for NAD(+). Val-180 lines the K(+) pocket. 230–233 (GTST) is an NAD(+) binding site. Leu-246 provides a ligand contact to K(+). Catalysis depends on Glu-252, which acts as the Proton acceptor. Gly-254, Cys-286, and Glu-387 together coordinate NAD(+). Cys-286 functions as the Nucleophile in the catalytic mechanism. Residue Cys-286 is modified to Cysteine sulfenic acid (-SOH). 2 residues coordinate K(+): Lys-457 and Gly-460. Catalysis depends on Glu-464, which acts as the Charge relay system.

The protein belongs to the aldehyde dehydrogenase family. Dimer of dimers. K(+) serves as cofactor.

The catalysed reaction is betaine aldehyde + NAD(+) + H2O = glycine betaine + NADH + 2 H(+). It functions in the pathway amine and polyamine biosynthesis; betaine biosynthesis via choline pathway; betaine from betaine aldehyde: step 1/1. Functionally, involved in the biosynthesis of the osmoprotectant glycine betaine. Catalyzes the irreversible oxidation of betaine aldehyde to the corresponding acid. This Pseudomonas paraeruginosa (strain DSM 24068 / PA7) (Pseudomonas aeruginosa (strain PA7)) protein is Betaine aldehyde dehydrogenase.